The primary structure comprises 71 residues: Small ribosomal subunit protein bS21 (71 aa).

Positions 48–60 are enriched in basic residues; sequence KKAAAVKRYKKKL. The tract at residues 48-71 is disordered; the sequence is KKAAAVKRYKKKLQRESIRTTRMY. The segment covering 61–71 has biased composition (basic and acidic residues); the sequence is QRESIRTTRMY.

It belongs to the bacterial ribosomal protein bS21 family.

The chain is Small ribosomal subunit protein bS21 from Psychrobacter sp. (strain PRwf-1).